A 598-amino-acid chain; its full sequence is Fructan 6-exohydrolase (598 aa).

A signal peptide spans 1 to 30 (MAARLPLAACVVAFHLCLLLSSLVRSPSTA). D65 is an active-site residue. N93, N288, and N351 each carry an N-linked (GlcNAc...) asparagine glycan. A disulfide bridge connects residues C451 and C497. N572 carries an N-linked (GlcNAc...) asparagine glycan.

This sequence belongs to the glycosyl hydrolase 32 family. Expressed in leaves, stems, roots and inflorescences. Maximum expression is detected in stems, particularly the penultimate internode.

The enzyme catalyses Hydrolysis of terminal, non-reducing (2-&gt;6)-linked beta-D-fructofuranose residues in fructans.. Not inhibited by sucrose. Hydrolyzes levan-type beta-(2-&gt;6)-linked fructans to fructose, but not inulin-type beta-(2-&gt;1)-linked fructans. This Triticum aestivum (Wheat) protein is Fructan 6-exohydrolase.